The following is a 606-amino-acid chain: MIISPFKKQTARRYTHSVKIGSLFVGSEHSIKMQSMTTTPTSDVDATVAQICSLVEAKCDIARVTVQGVKEAQACEHIKERLLTMGLDIPLVADIHFFPQAAMHVADFVDKVRINPGNFVDKRNMFSGKTYTDKNYADSLLRLEEKFSPLVEKCKRLGKAMRIGVNHGSLSERIMQRYGDTIEGMVVSALEYIKVCENLGYRDVVFSMKSSNPKVMVAAYRQLAKDLDARGWHYPLHLGVTEAGMGMDGIIKSAVGIGTLLTEGLGDTIRCSLTGCPTEEIPVCESLLKHTTIYLNLPKQENPFALENSESFVNASKKITKTTPWGSVYGVFIKLHEHHILNTTAERLLEQLGINPTNGKKDATAPEGVVIPKSFLGTSIIEKLQKHMSVFHHHEVPCLYDYNEEIWNNEQVLSAPFVHCHATPPFIHSVRSFFSKRQCEDQPVKLVFSKDLDDEYEATVSIATEFGALLLDGLGEGVILDLPNIPLPTVREIAFGTLQSAGVRLVKTEYISCPGCGRTLFDLPEVTTRIRNKTKHLVGLKIAVMGCIVNGPGEMADADFGFVGSKTGMIDLYVKHTCVKAHIPMEDAEEELFRLLQEHGVWKDPE.

[4Fe-4S] cluster is bound by residues Cys-513, Cys-516, Cys-547, and Glu-554.

This sequence belongs to the IspG family. Requires [4Fe-4S] cluster as cofactor.

It carries out the reaction (2E)-4-hydroxy-3-methylbut-2-enyl diphosphate + oxidized [flavodoxin] + H2O + 2 H(+) = 2-C-methyl-D-erythritol 2,4-cyclic diphosphate + reduced [flavodoxin]. It functions in the pathway isoprenoid biosynthesis; isopentenyl diphosphate biosynthesis via DXP pathway; isopentenyl diphosphate from 1-deoxy-D-xylulose 5-phosphate: step 5/6. In terms of biological role, converts 2C-methyl-D-erythritol 2,4-cyclodiphosphate (ME-2,4cPP) into 1-hydroxy-2-methyl-2-(E)-butenyl 4-diphosphate. This is 4-hydroxy-3-methylbut-2-en-1-yl diphosphate synthase (flavodoxin) from Chlamydia felis (strain Fe/C-56) (Chlamydophila felis).